Consider the following 639-residue polypeptide: 3D-(3,5/4)-trihydroxycyclohexane-1,2-dione hydrolase (639 aa).

Position 65 (Glu-65) interacts with thiamine diphosphate. The thiamine pyrophosphate binding stretch occupies residues 437 to 517 (SLPGDLQRMW…INIILFDNSG (81 aa)). Asp-488 and Asn-515 together coordinate Mg(2+).

The protein belongs to the TPP enzyme family. It depends on Mg(2+) as a cofactor. Thiamine diphosphate is required as a cofactor.

It carries out the reaction 3D-3,5/4-trihydroxycyclohexane-1,2-dione + H2O = 5-deoxy-D-glucuronate + H(+). It functions in the pathway polyol metabolism; myo-inositol degradation into acetyl-CoA; acetyl-CoA from myo-inositol: step 3/7. Functionally, involved in the cleavage of the C1-C2 bond of 3D-(3,5/4)-trihydroxycyclohexane-1,2-dione (THcHDO) to yield 5-deoxy-glucuronate (5DG). In Geobacillus thermodenitrificans (strain NG80-2), this protein is 3D-(3,5/4)-trihydroxycyclohexane-1,2-dione hydrolase.